Consider the following 442-residue polypeptide: uncharacterized protein (442 aa).

The disordered stretch occupies residues 211–269 (LDYSTDKPEDSESEDIELEDSESEDSESEDIDQHGGQGPDDDEFNANFDDPQFDEFDFG). Acidic residues predominate over residues 221–240 (SESEDIELEDSESEDSESED).

It is found in the virion. This is an uncharacterized protein from Acanthamoeba polyphaga (Amoeba).